A 227-amino-acid chain; its full sequence is GRF-interacting factor 1 (227 aa).

The segment covering 124 to 139 has biased composition (low complexity); that stretch reads ALSPLQQQQQQQAAAA. Disordered regions lie at residues 124–160 and 188–227; these read ALSPLQQQQQQQAAAAHGQLGMGSGGTTSGFSILHGE and GGGGGGKEGSTSLSVDVRGANSGAQSGDGEYLKGTEEEGS. Residues 217–227 show a composition bias toward basic and acidic residues; sequence EYLKGTEEEGS.

Belongs to the SS18 family. As to quaternary structure, interacts with GRF4. In terms of tissue distribution, highly expressed in internodes, nodes, developing spikelets and developing anthers. Expressed at low levels in roots and mature glumes.

It is found in the nucleus. Its subcellular location is the cytoplasm. Transcription coactivator that plays a role in the regulation of meristematic function in leaves, stems and inflorescences. May regulate leaf size, length of stem internodes, and seed size by promoting cell expansion. Transcription coactivator that plays a role in the regulation of grain size. Component of a network formed by the microRNA396 (miRNA396), the GRFs and their interacting factors (GIFs) acting in the regulation of meristem function, at least partially through the control of cell proliferation. Component of the miRNA396c-GRF4-GIF1 regulatory module that plays an important role in grain size determination. This is GRF-interacting factor 1 from Oryza sativa subsp. japonica (Rice).